The primary structure comprises 1412 residues: Ecdysone-induced protein 75B, isoform B (1412 aa).

Low complexity predominate over residues 1 to 14 (MEAVQAAAAATSSG). Disordered stretches follow at residues 1-96 (MEAV…PGGT), 110-204 (QRAT…QQHV), 258-298 (QYQQ…VPPP), and 321-448 (HFQQ…SIPD). Residues 15–25 (GSSGSVPGSGS) are compositionally biased toward gly residues. Positions 32–57 (IKTEPIDFEMLHLEENERQQDIEREP) are enriched in basic and acidic residues. The span at 58–68 (SSSNSNSNSNS) shows a compositional bias: low complexity. Polar residues predominate over residues 69 to 81 (LTPQRYTHVQVQT). A compositionally biased stretch (low complexity) spans 87 to 96 (PTGLTTPGGT). The span at 124–133 (YSQQQGTAAS) shows a compositional bias: polar residues. A compositionally biased stretch (low complexity) spans 135–150 (SAPPETTALLTTTSGT). The segment covering 151–164 (PQIIITRTLPSNQH) has biased composition (polar residues). Over residues 177–203 (HHYQQQQPQRQQSPPPLHHQQQQQQQH) the composition is skewed to low complexity. Pro residues predominate over residues 266 to 284 (PLAPPPPPPPPPPPPPPPQ). Low complexity-rich tracts occupy residues 323–371 (QQQQ…SSHI), 378–403 (SSSS…NSVM), and 417–447 (ASSS…SSIP). Residues 455–531 (TVLCRVCGDK…VGMSRDAVRF (77 aa)) constitute a DNA-binding region (nuclear receptor). NR C4-type zinc fingers lie at residues 458–478 (CRVC…CEGC) and 495–514 (CTKN…CQYC). Positions 565–813 (DQPRLLAAVL…QQMWSMEDGN (249 aa)) constitute an NR LBD domain. 6 disordered regions span residues 837–878 (KSPL…SALA), 984–1021 (LDSP…SVDD), 1044–1064 (VSVS…KRQI), 1108–1174 (AEAD…SSHS), 1204–1317 (ENST…SNSA), and 1368–1401 (VTVT…NPGL). 5 stretches are compositionally biased toward low complexity: residues 854–866 (GSPS…GVSL), 1005–1017 (SSGG…SPRS), 1044–1058 (VSVS…STSS), 1110–1155 (ADAS…AQSQ), and 1163–1174 (SSPKASMASSHS). Composition is skewed to polar residues over residues 1206-1219 (STAA…VGNR) and 1231-1253 (AVQN…QRQQ). Composition is skewed to low complexity over residues 1254–1290 (SVSP…SASS), 1299–1317 (STSN…SNSA), and 1372–1400 (ASNG…PNPG).

Belongs to the nuclear hormone receptor family. NR1 subfamily.

The protein localises to the nucleus. Its function is as follows. Implicated in the regulation of ecdysone-triggered gene hierarchies. Probably plays a key role in mediating the regulation of the larval molt by 20-OH-ecdysone. This is Ecdysone-induced protein 75B, isoform B (Eip75B) from Drosophila melanogaster (Fruit fly).